The following is a 224-amino-acid chain: MAEQPAGGQGAGDSRDSRGDRDSRGRRGDGGRGGRDRDGDKSNYLERVVAINRVSKVVKGGRRFSFTALVIVGDGNGMVGVGYGKAKEVPAAIAKGVEEARKGFFRVPLIRGTITHPVQGEAAAGVVLLRPASPGTGVIAGGAARAVLECAGVHDILAKSLGSDNAINVVHATVAALKLLQRPEEVAARRGLPIEDVAPAGMLKARRESDALASAAAAREAAAQ.

The disordered stretch occupies residues 1-40; it reads MAEQPAGGQGAGDSRDSRGDRDSRGRRGDGGRGGRDRDGD. Residues 13-40 are compositionally biased toward basic and acidic residues; that stretch reads DSRDSRGDRDSRGRRGDGGRGGRDRDGD. The S5 DRBM domain maps to 44–107; the sequence is YLERVVAINR…EEARKGFFRV (64 aa).

This sequence belongs to the universal ribosomal protein uS5 family. As to quaternary structure, part of the 30S ribosomal subunit. Contacts proteins S4 and S8.

Functionally, with S4 and S12 plays an important role in translational accuracy. In terms of biological role, located at the back of the 30S subunit body where it stabilizes the conformation of the head with respect to the body. The sequence is that of Small ribosomal subunit protein uS5 from Mycolicibacterium paratuberculosis (strain ATCC BAA-968 / K-10) (Mycobacterium paratuberculosis).